The following is a 516-amino-acid chain: NAD(P)H-quinone oxidoreductase chain 4, chloroplastic (516 aa).

14 consecutive transmembrane segments (helical) span residues 4 to 24, 37 to 57, 87 to 107, 111 to 131, 134 to 154, 167 to 187, 208 to 228, 242 to 262, 272 to 292, 305 to 325, 330 to 350, 386 to 406, 416 to 436, and 462 to 482; these read FPWL…IFLL, LCIC…HFQL, IGPI…AWPV, AQLF…SFSS, LLLF…LLSM, FILY…GIGL, ALEV…LPII, HYST…YGLV, AHCL…IYAA, IAYS…SLSD, GAIL…FLAG, LALP…GIIT, ILIA…SLSM, and LFVS…PDFV.

The protein belongs to the complex I subunit 4 family.

The protein localises to the plastid. It is found in the chloroplast thylakoid membrane. It catalyses the reaction a plastoquinone + NADH + (n+1) H(+)(in) = a plastoquinol + NAD(+) + n H(+)(out). The catalysed reaction is a plastoquinone + NADPH + (n+1) H(+)(in) = a plastoquinol + NADP(+) + n H(+)(out). This is NAD(P)H-quinone oxidoreductase chain 4, chloroplastic from Oenothera argillicola (Appalachian evening primrose).